The sequence spans 382 residues: Lipid-A-disaccharide synthase (382 aa).

The protein belongs to the LpxB family.

The enzyme catalyses 2-N,3-O-bis[(3R)-3-hydroxytetradecanoyl]-alpha-D-glucosaminyl 1-phosphate + UDP-2-N,3-O-bis[(3R)-3-hydroxytetradecanoyl]-alpha-D-glucosamine = lipid A disaccharide (E. coli) + UDP + H(+). It carries out the reaction a lipid X + a UDP-2-N,3-O-bis[(3R)-3-hydroxyacyl]-alpha-D-glucosamine = a lipid A disaccharide + UDP + H(+). It functions in the pathway glycolipid biosynthesis; lipid IV(A) biosynthesis; lipid IV(A) from (3R)-3-hydroxytetradecanoyl-[acyl-carrier-protein] and UDP-N-acetyl-alpha-D-glucosamine: step 5/6. Condensation of UDP-2,3-diacylglucosamine and 2,3-diacylglucosamine-1-phosphate to form lipid A disaccharide, a precursor of lipid A, a phosphorylated glycolipid that anchors the lipopolysaccharide to the outer membrane of the cell. This chain is Lipid-A-disaccharide synthase, found in Escherichia coli (strain SMS-3-5 / SECEC).